The sequence spans 75 residues: U-stichotoxin-Hau3a (75 aa).

Residues Met1 to Ala19 form the signal peptide. Residues Glu20–Arg26 constitute a propeptide that is removed on maturation. Cystine bridges form between Cys31/Cys71, Cys33/Cys61, and Cys54/Cys72.

Belongs to the sea anemone sodium channel inhibitory toxin family. Type I subfamily. Post-translationally, contains 3 disulfide bonds.

It is found in the secreted. Its subcellular location is the nematocyst. In terms of biological role, toxin that is lethal to crab. This is U-stichotoxin-Hau3a from Heteractis aurora (Banded sea anemone).